Consider the following 284-residue polypeptide: MSLNFPLLLVIAVAVCGLLALLDLVFFAPRRRSAIASYQGSVSQPDAVVIEKLNKEPLLVEYGKSFFPVLFIVLVLRSFLVEPFQIPSGSMKPTLDVGDFILVNKFSYGIRLPVIDKKVIEVGDPQRGDVMVFRYPSDPNVNYIKRVVGLPGDVVRYTSDKRLFINGESVAEKLLGAEPNTLGSAELYQEKLGAVEHEIRKEMSRYRAMPDGQWKVPAGHYFMMGDNRDNSNDSRYWDDPNIPKDLLGMVPDENIVGKAFAVWMSWPEPKLSHLPNFSRVGLIK.

A helical membrane pass occupies residues 4–22 (NFPLLLVIAVAVCGLLALL). The Cytoplasmic portion of the chain corresponds to 23–58 (DLVFFAPRRRSAIASYQGSVSQPDAVVIEKLNKEPL). A helical membrane pass occupies residues 59–77 (LVEYGKSFFPVLFIVLVLR). Topologically, residues 78–284 (SFLVEPFQIP…PNFSRVGLIK (207 aa)) are periplasmic. Residues Ser-90 and Lys-145 contribute to the active site.

The protein belongs to the peptidase S26 family.

The protein localises to the cell inner membrane. The enzyme catalyses Cleavage of hydrophobic, N-terminal signal or leader sequences from secreted and periplasmic proteins.. The sequence is that of Signal peptidase I (lepB) from Pseudomonas fluorescens.